Reading from the N-terminus, the 427-residue chain is L-cysteine:1D-myo-inositol 2-amino-2-deoxy-alpha-D-glucopyranoside ligase (427 aa).

Cys-46 contributes to the Zn(2+) binding site. L-cysteinyl-5'-AMP contacts are provided by residues 46–49 (CGIT), Thr-61, and 84–86 (NVT). Positions 48 to 58 (ITPYDATHMGH) match the 'HIGH' region motif. A 'ERGGDP' region motif is present at residues 186–191 (ERGGDP). Trp-233 provides a ligand contact to L-cysteinyl-5'-AMP. A Zn(2+)-binding site is contributed by Cys-237. Position 255–257 (255–257 (GSD)) interacts with L-cysteinyl-5'-AMP. His-262 provides a ligand contact to Zn(2+). Residue Val-289 coordinates L-cysteinyl-5'-AMP. The short motif at 295–299 (KMSKS) is the 'KMSKS' region element.

This sequence belongs to the class-I aminoacyl-tRNA synthetase family. MshC subfamily. Monomer. Zn(2+) is required as a cofactor.

It carries out the reaction 1D-myo-inositol 2-amino-2-deoxy-alpha-D-glucopyranoside + L-cysteine + ATP = 1D-myo-inositol 2-(L-cysteinylamino)-2-deoxy-alpha-D-glucopyranoside + AMP + diphosphate + H(+). Catalyzes the ATP-dependent condensation of GlcN-Ins and L-cysteine to form L-Cys-GlcN-Ins. This Catenulispora acidiphila (strain DSM 44928 / JCM 14897 / NBRC 102108 / NRRL B-24433 / ID139908) protein is L-cysteine:1D-myo-inositol 2-amino-2-deoxy-alpha-D-glucopyranoside ligase.